We begin with the raw amino-acid sequence, 805 residues long: Na(+)/H(+) antiporter subunit A (805 aa).

Transmembrane regions (helical) follow at residues 4–22, 29–51, 80–102, 109–128, 132–154, 167–189, 209–231, 244–266, 271–293, 300–322, 332–354, 375–397, 431–453, 474–496, 529–551, 597–614, 629–651, 656–674, 679–701, 714–736, and 778–795; these read LHWA…PFLY, HTGW…YLSI, SLLF…IFYL, LNNF…GVVL, LIVL…SYWF, MLIT…VMTG, FLPA…PFHI, SAYL…LTPV, AEWF…TSAV, GILA…LGSA, PAFY…TFKG, LGGL…ASMA, IIIV…IMFF, IGML…FPNI, GFNA…FLMM, YFAY…YTMF, IAPY…PFIN, AVVV…FVVF, LALT…FYHL, NVLN…LSSL, and MLEV…IALI.

It belongs to the CPA3 antiporters (TC 2.A.63) subunit A family. Forms a heterooligomeric complex that consists of seven subunits: MrpA, MrpB, MrpC, MrpD, MrpE, MrpF and MrpG.

Its subcellular location is the cell membrane. Mnh complex is a Na(+)Li(+)/H(+) antiporter involved in Na(+) and/or Li(+) excretion and Na(+) resistance. Na(+)/H(+) antiport consumes a transmembrane electrical potential, and is thus inferred to be electrogenic. Does not transport K(+), Ca(2+) or Mg(2+). The polypeptide is Na(+)/H(+) antiporter subunit A (mrpA) (Alkalihalophilus pseudofirmus (strain ATCC BAA-2126 / JCM 17055 / OF4) (Bacillus pseudofirmus)).